Reading from the N-terminus, the 212-residue chain is High frequency lysogenization protein HflD homolog (212 aa).

This sequence belongs to the HflD family.

It localises to the cytoplasm. The protein resides in the cell inner membrane. This is High frequency lysogenization protein HflD homolog from Pectobacterium carotovorum subsp. carotovorum (strain PC1).